Consider the following 233-residue polypeptide: Transmembrane protein 40 (233 aa).

N-acetylmethionine is present on methionine 1. The segment covering 1–14 (METSASSSQPQDNS) has biased composition (polar residues). The tract at residues 1-143 (METSASSSQP…RRGSDPASGE (143 aa)) is disordered. Low complexity predominate over residues 50–70 (SSSSSSSSSSSSSSSSSSSSS). A compositionally biased stretch (gly residues) spans 93 to 104 (YPHGNGSPGPGH). Basic and acidic residues predominate over residues 105-114 (GEPDVLKDEL). Serine 137 carries the post-translational modification Phosphoserine. Helical transmembrane passes span 160–180 (FFHF…YHYY) and 187–207 (LGVG…FGLV).

The protein localises to the membrane. The sequence is that of Transmembrane protein 40 (TMEM40) from Homo sapiens (Human).